Consider the following 164-residue polypeptide: Choriogonadotropin subunit beta (164 aa).

Positions 1–20 are cleaved as a signal peptide; sequence MEMLQGLLLCLLLSTGGAWA. Intrachain disulfides connect Cys29-Cys77, Cys43-Cys92, Cys46-Cys130, Cys54-Cys108, Cys58-Cys110, and Cys113-Cys120. N-linked (GlcNAc...) asparagine glycosylation is present at Asn50. Residues 133–164 are disordered; the sequence is HTSQDSSSKDPPRNLTSPSQLPEPADAPLVPQ. The O-linked (GalNAc...) serine glycan is linked to Ser140. An N-linked (GlcNAc...) asparagine glycan is attached at Asn146. The O-linked (GalNAc...) serine glycan is linked to Ser151.

Belongs to the glycoprotein hormones subunit beta family. In terms of assembly, heterodimer of a common alpha chain and a unique beta chain which confers biological specificity to thyrotropin, lutropin, follitropin and gonadotropin.

Its subcellular location is the secreted. Its function is as follows. Stimulates the ovaries to synthesize the steroids that are essential for the maintenance of pregnancy. The sequence is that of Choriogonadotropin subunit beta (CGB) from Aotus nancymaae (Ma's night monkey).